Consider the following 293-residue polypeptide: MALLTAQGVKKVFQFQKPEGREHLRRLLNWEEFDELRDSRRSILLDTLYESIIFAVGKGFPWREVAQVVKFTEELLKETKGCSITEAVTILGNKLRDYQGQFNTTHLLALCDYFHNTFIRHYKLYQYVLGQDQDVNLTVTNLEVCTPPQPLPLAEGKDREVWKHEQQLEELSTAEVQKRTNMLLLKGALRLEQQHLLQETFSQLPGRRHQTLNREELEKLITEAIHIQIECLKELLQYEIQITFDILDLKLQKKTLNLNAPIPPLVPIAGQPGQDEALKLSKTHKGKKAKAKK.

This is an uncharacterized protein from Bos taurus (Bovine).